The sequence spans 399 residues: RNA polymerase sigma factor SigA1 (399 aa).

Residues 1–73 (MTQLISIDKE…DEDSVGEDED (73 aa)) form a disordered region. Residues 60 to 73 (DAIDDEDSVGEDED) show a composition bias toward acidic residues. Residues 167-237 (MVQSNLRLVV…TRAIADQSRT (71 aa)) are sigma-70 factor domain-2. Residues 191–194 (DLIQ) carry the Interaction with polymerase core subunit RpoC motif. The interval 246 to 321 (ETISRIKKTT…EADGETPEDE (76 aa)) is sigma-70 factor domain-3. Residues 334 to 387 (VLSTLSPRERDVLRLRYGLDDGRMKTLEEIGQLFNVTRERIRQIEAKALRKLRH) form a sigma-70 factor domain-4 region. Positions 360-379 (LEEIGQLFNVTRERIRQIEA) form a DNA-binding region, H-T-H motif.

This sequence belongs to the sigma-70 factor family. RpoD/SigA subfamily. As to quaternary structure, interacts transiently with the RNA polymerase catalytic core.

It is found in the cytoplasm. Its function is as follows. Sigma factors are initiation factors that promote the attachment of RNA polymerase to specific initiation sites and are then released. This sigma factor is the primary sigma factor during exponential growth. The chain is RNA polymerase sigma factor SigA1 from Synechococcus elongatus (strain ATCC 33912 / PCC 7942 / FACHB-805) (Anacystis nidulans R2).